The chain runs to 191 residues: MAYSTREILLALCIRDSRVHGNGTLHPVLELAARETPLRLSPEDTVVLRYHVLLEEIIERNSETFTETWNRFITHTEHVDLDFNSVFLEIFHRGDPSLGRALAWMAWCMHACRTLCCNQSTPYYVVDLSVRGMLEASEGLDGWIHQQGGWSTLIEDNIPGSRRFSWTLFLAGLTLSLLVICSYLFISRGRH.

An interaction with host VRK2 region spans residues 1–18 (MAYSTREILLALCIRDSR). N-linked (GlcNAc...) asparagine; by host glycosylation occurs at asparagine 22. Positions 89–109 (EIFHRGDPSLGRALAWMAWCM) match the BH1 motif. The interaction with host VRK2 stretch occupies residues 89–142 (EIFHRGDPSLGRALAWMAWCMHACRTLCCNQSTPYYVVDLSVRGMLEASEGLDG). Residue asparagine 118 is glycosylated (N-linked (GlcNAc...) asparagine; by host). The BH2 motif lies at 142–157 (GWIHQQGGWSTLIEDN). A helical membrane pass occupies residues 166-186 (WTLFLAGLTLSLLVICSYLFI).

The protein belongs to the Bcl-2 family. As to quaternary structure, interacts with isoform 1 of host VRK2; this interaction is involved in protecting cells from apoptosis. Interacts with host PRA1; this interaction seems to modulate BHRF1 anti-apoptotic activity. Interacts with host BCL2L11. Interacts with host BAD and BBC3. Interacts with BALF1; BALF1 acting as a negative regulator of the survival function of BHRF1. Interacts with host BECN1.

Its subcellular location is the host membrane. The protein resides in the host mitochondrion. In terms of biological role, prevents premature death of the host cell during virus production, which would otherwise reduce the amount of progeny virus. Acts as a host B-cell leukemia/lymphoma 2 (Bcl-2) homolog, and interacts with pro-apoptotic proteins to prevent mitochondria permeabilization, release of cytochrome c and subsequent apoptosis of the host cell. In addition, plays a role in the inhibiton of host BECN1-mediated starvation-induced autophagy without affecting basal levels of autophagy. The sequence is that of Apoptosis regulator BHRF1 from Homo sapiens (Human).